The following is a 473-amino-acid chain: Photosystem II CP43 reaction center protein (473 aa).

A propeptide spanning residues 1–14 (MKILYSQRRFYHVE) is cleaved from the precursor. T15 is modified (N-acetylthreonine). At T15 the chain carries Phosphothreonine. 5 helical membrane-spanning segments follow: residues 69–93 (LFEV…PHLA), 134–155 (LIGP…KDKN), 178–200 (KALY…RKIT), 255–275 (KPFA…LSYS), and 291–312 (WFNN…ASQA). Residue E367 coordinates [CaMn4O5] cluster. The helical transmembrane segment at 447–471 (RARAAAAGFEKGIDRDFEPVLSMTP) threads the bilayer.

The protein belongs to the PsbB/PsbC family. PsbC subfamily. As to quaternary structure, PSII is composed of 1 copy each of membrane proteins PsbA, PsbB, PsbC, PsbD, PsbE, PsbF, PsbH, PsbI, PsbJ, PsbK, PsbL, PsbM, PsbT, PsbX, PsbY, PsbZ, Psb30/Ycf12, at least 3 peripheral proteins of the oxygen-evolving complex and a large number of cofactors. It forms dimeric complexes. Binds multiple chlorophylls and provides some of the ligands for the Ca-4Mn-5O cluster of the oxygen-evolving complex. It may also provide a ligand for a Cl- that is required for oxygen evolution. PSII binds additional chlorophylls, carotenoids and specific lipids. serves as cofactor.

It is found in the plastid. Its subcellular location is the chloroplast thylakoid membrane. Functionally, one of the components of the core complex of photosystem II (PSII). It binds chlorophyll and helps catalyze the primary light-induced photochemical processes of PSII. PSII is a light-driven water:plastoquinone oxidoreductase, using light energy to abstract electrons from H(2)O, generating O(2) and a proton gradient subsequently used for ATP formation. This Physcomitrium patens (Spreading-leaved earth moss) protein is Photosystem II CP43 reaction center protein.